A 457-amino-acid chain; its full sequence is CUB1 family protein C30C2.08 (457 aa).

Coiled coils occupy residues 119 to 174 (TQND…NISK) and 418 to 448 (QELVNSLLTQCHQLIEELRDEKHQHDIEERE).

This sequence belongs to the CUB1 family.

It localises to the cytoplasm. The protein resides in the nucleus. In terms of biological role, involved in bleomycin tolerance with links to DNA repair and/or proteasome function. In Schizosaccharomyces pombe (strain 972 / ATCC 24843) (Fission yeast), this protein is CUB1 family protein C30C2.08.